A 253-amino-acid polypeptide reads, in one-letter code: MITNTAAYQFVTIQHPQTLAASVLAQAEQQALKGSVLIAEEGINLFLAGDAEQIGAFYAWLQADARFARMRIKYSESAYQPFARLKVKIKPEIISFRRDDASPLQGRAPSVTPAVLREWLRNGQDDRGRPLVLLDTRNAQEVVYGTFQGALTLPIDTFTELPGALESHRAALADATVVSFCTGGIRCEKAALWMQADGMDNVLQLEGGILGYFEEVGGEGYDGRCFVFDERVALDPELKPLVDAERPAKTGKI.

One can recognise a Rhodanese domain in the interval 127-221 (RGRPLVLLDT…YFEEVGGEGY (95 aa)). Cys-181 functions as the Cysteine persulfide intermediate in the catalytic mechanism.

Belongs to the TrhO family.

It catalyses the reaction uridine(34) in tRNA + AH2 + O2 = 5-hydroxyuridine(34) in tRNA + A + H2O. Catalyzes oxygen-dependent 5-hydroxyuridine (ho5U) modification at position 34 in tRNAs. The sequence is that of tRNA uridine(34) hydroxylase from Xanthomonas oryzae pv. oryzae (strain MAFF 311018).